The primary structure comprises 726 residues: Long-chain-fatty-acid--CoA ligase ACSBG1 (726 aa).

The interval 1–39 is disordered; it reads MPDSRAAPQESLLDASLGTTQENVGTSSLTDGQTLSKEP. A compositionally biased stretch (polar residues) spans 17-36; the sequence is LGTTQENVGTSSLTDGQTLS. Ser36 is modified (phosphoserine). Tyr641 bears the Phosphotyrosine mark. Residues 707–726 are disordered; sequence SKQGSSLPGFSLRWQTGASS.

The protein belongs to the ATP-dependent AMP-binding enzyme family. Bubblegum subfamily.

It localises to the cytoplasm. The protein localises to the cytoplasmic vesicle. The protein resides in the microsome. Its subcellular location is the endoplasmic reticulum. It is found in the cell membrane. It catalyses the reaction a long-chain fatty acid + ATP + CoA = a long-chain fatty acyl-CoA + AMP + diphosphate. The enzyme catalyses (E)-hexadec-2-enoate + ATP + CoA = (2E)-hexadecenoyl-CoA + AMP + diphosphate. The catalysed reaction is hexadecanoate + ATP + CoA = hexadecanoyl-CoA + AMP + diphosphate. Its function is as follows. Catalyzes the conversion of fatty acids such as long-chain and very long-chain fatty acids to their active form acyl-CoAs for both synthesis of cellular lipids, and degradation via beta-oxidation. Can activate diverse saturated, monosaturated and polyunsaturated fatty acids. This chain is Long-chain-fatty-acid--CoA ligase ACSBG1, found in Bos taurus (Bovine).